A 292-amino-acid polypeptide reads, in one-letter code: Non-homologous end joining protein Ku (292 aa).

Residues 9–187 (ITFGLVNVPV…TVPPITEREL (179 aa)) form the Ku domain. Residues 264-285 (AASAFPAAEKAPAGKNAATASA) are compositionally biased toward low complexity. Positions 264–292 (AASAFPAAEKAPAGKNAATASAKKARKLA) are disordered.

This sequence belongs to the prokaryotic Ku family. In terms of assembly, homodimer. Interacts with LigD.

Its function is as follows. With LigD forms a non-homologous end joining (NHEJ) DNA repair enzyme, which repairs dsDNA breaks with reduced fidelity. Binds linear dsDNA with 5'- and 3'- overhangs but not closed circular dsDNA nor ssDNA. Recruits and stimulates the ligase activity of LigD. In Leifsonia xyli subsp. xyli (strain CTCB07), this protein is Non-homologous end joining protein Ku.